The primary structure comprises 348 residues: MTTEKTVVFVSGATGFIALHVVDDLLKTGYKVIGSGRSQEKNDGLLKKFKSNPNLSMEIVEDIAAPNAFDKVFQKHGKEIKVVLHIASPVHFNTTDFEKDLLIPAVNGTKSILEAIKNYAADTVEKVVITSSVAALASPGDMKDTSFVVNEESWNKDTWESCQANAVSAYCGSKKFAEKTAWDFLEENQSSIKFTLSTINPGFVFGPQLFADSLRNGINSSSAIIANLVSYKLGDNFYNYSGPFIDVRDVSKAHLLAFEKPECAGQRLFLCEDMFCSQEALDILNEEFPQLKGKIATGEPGSGSTFLTKNCCKCDNRKTKNLLGFQFNKFRDCIVDTASQLLEVQSKS.

Residues Lys41 and Tyr170 each contribute to the NADP(+) site. At Ser339 the chain carries Phosphoserine.

Belongs to the NAD(P)-dependent epimerase/dehydratase family. Dihydroflavonol-4-reductase subfamily.

This is an uncharacterized protein from Saccharomyces cerevisiae (strain ATCC 204508 / S288c) (Baker's yeast).